The chain runs to 420 residues: Glucose-1-phosphate adenylyltransferase (420 aa).

Residues Y107, G172, 187 to 188 (EK), and S205 each bind alpha-D-glucose 1-phosphate.

The protein belongs to the bacterial/plant glucose-1-phosphate adenylyltransferase family. Homotetramer.

The catalysed reaction is alpha-D-glucose 1-phosphate + ATP + H(+) = ADP-alpha-D-glucose + diphosphate. The protein operates within glycan biosynthesis; glycogen biosynthesis. Its function is as follows. Involved in the biosynthesis of ADP-glucose, a building block required for the elongation reactions to produce glycogen. Catalyzes the reaction between ATP and alpha-D-glucose 1-phosphate (G1P) to produce pyrophosphate and ADP-Glc. This chain is Glucose-1-phosphate adenylyltransferase, found in Rhizobium meliloti (strain 1021) (Ensifer meliloti).